Consider the following 357-residue polypeptide: MKEFKIAVIPGDGIGPDIVREAVKIMTKVGEKYDTKFNFVEVKAGGDAIDAYGEPLPKETIDVCKSSAAVLLGAVGGPKWDNLEGSKRPERALLGLRGALGLYANLRPAKVYNVLKSASPLKNEIIDEGVDLLVVRELIGGIYFGDRGTKEVNGVETAFDTEKYNVDEVKRIAHSAFKAAMKRRKKVTSVDKANVLDASRLWRKTVNEVSKEYPEVELSHLYVDNTAMQLVRKPSQFDVILTNNIFGDILSDEASMITGSIGMLASSSIREDSFGMYEPIHGSAPDIAGLDIANPLAQILSAAMLMEYSLDMSEAARDVEAAVEKVLNEGYRTADIYIEGTKKVGTSEMGNLVLERL.

77–90 (GPKWDNLEGSKRPE) serves as a coordination point for NAD(+). Residues arginine 97, arginine 107, arginine 136, and aspartate 224 each contribute to the substrate site. Residues aspartate 224, aspartate 248, and aspartate 252 each contribute to the Mg(2+) site. 282–294 (GSAPDIAGLDIAN) provides a ligand contact to NAD(+).

This sequence belongs to the isocitrate and isopropylmalate dehydrogenases family. LeuB type 1 subfamily. In terms of assembly, homodimer. Requires Mg(2+) as cofactor. Mn(2+) serves as cofactor.

It localises to the cytoplasm. The enzyme catalyses (2R,3S)-3-isopropylmalate + NAD(+) = 4-methyl-2-oxopentanoate + CO2 + NADH. Its pathway is amino-acid biosynthesis; L-leucine biosynthesis; L-leucine from 3-methyl-2-oxobutanoate: step 3/4. In terms of biological role, catalyzes the oxidation of 3-carboxy-2-hydroxy-4-methylpentanoate (3-isopropylmalate) to 3-carboxy-4-methyl-2-oxopentanoate. The product decarboxylates to 4-methyl-2 oxopentanoate. The polypeptide is 3-isopropylmalate dehydrogenase (leuB) (Clostridium pasteurianum).